The primary structure comprises 164 residues: Large ribosomal subunit protein uL10 (164 aa).

Belongs to the universal ribosomal protein uL10 family. In terms of assembly, part of the ribosomal stalk of the 50S ribosomal subunit. The N-terminus interacts with L11 and the large rRNA to form the base of the stalk. The C-terminus forms an elongated spine to which L12 dimers bind in a sequential fashion forming a multimeric L10(L12)X complex.

Functionally, forms part of the ribosomal stalk, playing a central role in the interaction of the ribosome with GTP-bound translation factors. This is Large ribosomal subunit protein uL10 from Aliivibrio fischeri (strain MJ11) (Vibrio fischeri).